Here is a 470-residue protein sequence, read N- to C-terminus: Desmin (470 aa).

The interval 2 to 108 (SQAYSSSQRV…QEFLTTRTNE (107 aa)) is head. Serine 7 carries the phosphoserine; by CDK1 modification. Phosphoserine; by AURKB is present on serine 12. Arginine 16 bears the Omega-N-methylarginine mark. The residue at position 17 (threonine 17) is a Phosphothreonine; by AURKB and ROCK1. Residue serine 28 is modified to Phosphoserine; by CDK1. The residue at position 31 (serine 31) is a Phosphoserine. Serine 32 carries the phosphoserine; by CDK1 modification. Arginine 37 is modified (asymmetric dimethylarginine; alternate). Arginine 37 is subject to Omega-N-methylarginine; alternate. Serine 45 is modified (phosphoserine). At arginine 58 the chain carries ADP-ribosylarginine. Residue serine 60 is modified to Phosphoserine; by AURKB. Residue arginine 70 is modified to Omega-N-methylarginine. A Phosphothreonine; by ROCK1 modification is found at threonine 77. Residue serine 81 is modified to Phosphoserine. The 309-residue stretch at 108-416 (EKVELQELND…KLLEGEESRI (309 aa)) folds into the IF rod domain. Residues 109–141 (KVELQELNDRFANYIEKVRFLEQQNAALAAEVN) form a coil 1A region. A linker 1 region spans residues 142–151 (RLKGREPTRV). The segment at 152-252 (AEIYEEELRE…HEEEIRELQA (101 aa)) is coil 1B. The segment at 253–268 (QLQEQQVQVEMDMSKP) is linker 12. Residues 268–415 (PDLTAALRDI…RKLLEGEESR (148 aa)) are interaction with NEB. The coil 2A stretch occupies residues 269-287 (DLTAALRDIRAQYETIAAK). Positions 288 to 295 (NISEAEEW) are linker 2. A phosphoserine mark is found at serine 290, serine 358, serine 361, and serine 424. The interval 296 to 412 (YKSKVSDLTQ…ATYRKLLEGE (117 aa)) is coil 2B. Residues 413-470 (ESRINLPIQTFSALNFRETSPEQRGSEVHTKKTVMIKTIETRDGEVVSEATQQQHEVL) are tail. The segment at 438–453 (SEVHTKKTVMIKTIET) is interaction with CRYAB.

This sequence belongs to the intermediate filament family. Homomer. Interacts with DST. Interacts with MTM1. Interacts with EPPK1; interaction is dependent of higher-order structure of intermediate filament. Interacts with CRYAB. Interacts with NEB (via nebulin repeats 160-164). Interacts (via rod region) with NEBL (via nebulin repeats 1-5). Interacts with ASB2; the interaction targets DES for proteasomal degradation. Interacts with PKP1. Interacts with FLII. Post-translationally, ADP-ribosylation prevents ability to form intermediate filaments. In terms of processing, phosphorylation at Ser-7, Ser-28 and Ser-32 by CDK1 and phosphorylation at Ser-60 by AURKB contribute to efficient separation of desmin intermediate filaments during mitosis. Ubiquitination by a SCF-like complex containing ASB2 leads to proteasomal degradation.

It is found in the cytoplasm. The protein localises to the myofibril. The protein resides in the sarcomere. Its subcellular location is the z line. It localises to the cell membrane. It is found in the sarcolemma. The protein localises to the nucleus. The protein resides in the cell tip. Its subcellular location is the nucleus envelope. Muscle-specific type III intermediate filament essential for proper muscular structure and function. Plays a crucial role in maintaining the structure of sarcomeres, inter-connecting the Z-disks and forming the myofibrils, linking them not only to the sarcolemmal cytoskeleton, but also to the nucleus and mitochondria, thus providing strength for the muscle fiber during activity. In adult striated muscle they form a fibrous network connecting myofibrils to each other and to the plasma membrane from the periphery of the Z-line structures. May act as a sarcomeric microtubule-anchoring protein: specifically associates with detyrosinated tubulin-alpha chains, leading to buckled microtubules and mechanical resistance to contraction. Required for nuclear membrane integrity, via anchoring at the cell tip and nuclear envelope, resulting in maintenance of microtubule-derived intracellular mechanical forces. Contributes to the transcriptional regulation of the NKX2-5 gene in cardiac progenitor cells during a short period of cardiomyogenesis and in cardiac side population stem cells in the adult. Plays a role in maintaining an optimal conformation of nebulette (NEB) on heart muscle sarcomeres to bind and recruit cardiac alpha-actin. The polypeptide is Desmin (DES) (Bos taurus (Bovine)).